Reading from the N-terminus, the 677-residue chain is mRNA export factor Gle1 (677 aa).

The span at 34–48 (EDREPIWVEGSRKTP) shows a compositional bias: basic and acidic residues. Disordered regions lie at residues 34–65 (EDREPIWVEGSRKTPEPPLPEESPAPEPNNEI), 113–136 (KQDAMRLSRETQQRKEERQRDQLQ), and 294–366 (ERQR…ATST). A compositionally biased stretch (pro residues) spans 49 to 60 (EPPLPEESPAPE). Coiled-coil stretches lie at residues 122–179 (ETQQ…QKLH) and 280–346 (QQQL…AANV). Basic and acidic residues predominate over residues 294-340 (ERQRQQQQEEERQKLEEQQKLEEQEKLRKEKEESAAKEKQQEAETAK).

This sequence belongs to the GLE1 family. As to quaternary structure, may associate with the NPC.

Its subcellular location is the cytoplasm. The protein resides in the nucleus. The protein localises to the nuclear pore complex. Its function is as follows. Required for the export of mRNAs containing poly(A) tails from the nucleus into the cytoplasm. May be involved in the terminal step of the mRNA transport through the nuclear pore complex (NPC). In Drosophila melanogaster (Fruit fly), this protein is mRNA export factor Gle1.